We begin with the raw amino-acid sequence, 130 residues long: Small ribosomal subunit protein uS8 (130 aa).

The protein belongs to the universal ribosomal protein uS8 family. In terms of assembly, part of the 30S ribosomal subunit. Contacts proteins S5 and S12.

Functionally, one of the primary rRNA binding proteins, it binds directly to 16S rRNA central domain where it helps coordinate assembly of the platform of the 30S subunit. The protein is Small ribosomal subunit protein uS8 of Neisseria meningitidis serogroup C (strain 053442).